A 326-amino-acid chain; its full sequence is Ketol-acid reductoisomerase (NADP(+)) (326 aa).

The region spanning 2–182 (AKIYGDEDAS…GFTRAGVIKT (181 aa)) is the KARI N-terminal Rossmann domain. Residues 25 to 28 (YGSQ), Arg-48, Ser-53, and 83 to 86 (DEVQ) each bind NADP(+). His-108 is an active-site residue. Residue Gly-134 participates in NADP(+) binding. Positions 183-325 (TFREEVETDL…ERLRKMMGFE (143 aa)) constitute a KARI C-terminal knotted domain. Residues Asp-191, Glu-195, Glu-227, and Glu-231 each coordinate Mg(2+). Ser-252 contributes to the substrate binding site.

The protein belongs to the ketol-acid reductoisomerase family. The cofactor is Mg(2+).

The enzyme catalyses (2R)-2,3-dihydroxy-3-methylbutanoate + NADP(+) = (2S)-2-acetolactate + NADPH + H(+). The catalysed reaction is (2R,3R)-2,3-dihydroxy-3-methylpentanoate + NADP(+) = (S)-2-ethyl-2-hydroxy-3-oxobutanoate + NADPH + H(+). Its pathway is amino-acid biosynthesis; L-isoleucine biosynthesis; L-isoleucine from 2-oxobutanoate: step 2/4. The protein operates within amino-acid biosynthesis; L-valine biosynthesis; L-valine from pyruvate: step 2/4. Its function is as follows. Involved in the biosynthesis of branched-chain amino acids (BCAA). Catalyzes an alkyl-migration followed by a ketol-acid reduction of (S)-2-acetolactate (S2AL) to yield (R)-2,3-dihydroxy-isovalerate. In the isomerase reaction, S2AL is rearranged via a Mg-dependent methyl migration to produce 3-hydroxy-3-methyl-2-ketobutyrate (HMKB). In the reductase reaction, this 2-ketoacid undergoes a metal-dependent reduction by NADPH to yield (R)-2,3-dihydroxy-isovalerate. In Methanopyrus kandleri (strain AV19 / DSM 6324 / JCM 9639 / NBRC 100938), this protein is Ketol-acid reductoisomerase (NADP(+)).